The chain runs to 920 residues: Dynamin-2B (920 aa).

Methionine 1 is modified (N-acetylmethionine). Residues 35–303 (PATSLNVVAL…IRSRMKLRLP (269 aa)) enclose the Dynamin-type G domain. Residues 45–52 (GNVGAGKS) are G1 motif. 45-53 (GNVGAGKSA) contributes to the GTP binding site. The segment at 71-73 (ATR) is G2 motif. The segment at 143-146 (DLPG) is G3 motif. Residues 204–207 (SKID) are G4 motif. Residue 204–210 (SKIDQAA) coordinates GTP. The segment at 238–241 (ALIG) is G5 motif. A GTP-binding site is contributed by 246–249 (IASA). Basic and acidic residues predominate over residues 507–522 (RREEELKGRSSKKGQD). Disordered regions lie at residues 507–577 (RREE…TAGP) and 632–657 (IEEI…PDSK). A compositionally biased stretch (polar residues) spans 523-545 (AEQSLLNRATSPQPDGPSSTGGS). Basic and acidic residues-rich tracts occupy residues 548–567 (SLRD…KETP) and 641–652 (EKSKSSKDKKSN). One can recognise a PH domain in the interval 579–703 (GEITAGYLMK…WINKLQKVIQ (125 aa)). The 94-residue stretch at 737 to 830 (LRWMSQEVRG…QLSIHDNRAA (94 aa)) folds into the GED domain. An important for homodimerization region spans residues 747–761 (YVEAVLNSLAANVPK). The stretch at 788 to 812 (NERIESLIQEDQNVKRRRDRYQKQS) forms a coiled coil. The segment at 828–920 (RAAAASSWSD…PPQSGSSYRY (93 aa)) is disordered. Polar residues predominate over residues 833–849 (SSWSDNSGTESSPRTNG).

The protein belongs to the TRAFAC class dynamin-like GTPase superfamily. Dynamin/Fzo/YdjA family. Interacts with DRP1A at the plasma membrane and in forming clathrin-coated vesicles (CCV). In terms of tissue distribution, ubiquitous. Preferentially expressed in siliques.

Its subcellular location is the cytoplasm. It localises to the cytoskeleton. The protein localises to the cytoplasmic vesicle. The protein resides in the clathrin-coated vesicle. It is found in the cell membrane. It carries out the reaction GTP + H2O = GDP + phosphate + H(+). Functionally, putative microtubule-associated force-producing protein, able to bind and hydrolyze GTP. Collaboratively with DRP1A, participates in clathrin-coated vesicle formation during endocytosis. With DRP1A and PIP5K3, required for the precise coordination of polar ARAC3/ROP6 and ARAC4/ROP2 placement and subsequent root hair positioning during planar polarity formation in root hair-forming cells. The protein is Dynamin-2B of Arabidopsis thaliana (Mouse-ear cress).